A 159-amino-acid chain; its full sequence is Ribosome maturation factor RimP (159 aa).

Belongs to the RimP family.

It is found in the cytoplasm. Its function is as follows. Required for maturation of 30S ribosomal subunits. In Geobacter sulfurreducens (strain ATCC 51573 / DSM 12127 / PCA), this protein is Ribosome maturation factor RimP.